We begin with the raw amino-acid sequence, 940 residues long: Bifunctional uridylyltransferase/uridylyl-removing enzyme (940 aa).

Residues 1 to 379 form a uridylyltransferase region; the sequence is MPRRLRPTRL…PGARPKRKAL (379 aa). Residues 380 to 736 are uridylyl-removing; the sequence is DVEGFYEDGG…GQVRPGSNAA (357 aa). In terms of domain architecture, HD spans 496 to 618; that stretch reads VDEHTLRAVG…VENPERLRLL (123 aa). 2 consecutive ACT domains span residues 737–821 and 848–929; these read EVVI…PRRG and VVEA…AARP.

Belongs to the GlnD family. It depends on Mg(2+) as a cofactor.

It catalyses the reaction [protein-PII]-L-tyrosine + UTP = [protein-PII]-uridylyl-L-tyrosine + diphosphate. The catalysed reaction is [protein-PII]-uridylyl-L-tyrosine + H2O = [protein-PII]-L-tyrosine + UMP + H(+). Uridylyltransferase (UTase) activity is inhibited by glutamine, while glutamine activates uridylyl-removing (UR) activity. Its function is as follows. Modifies, by uridylylation and deuridylylation, the PII regulatory proteins (GlnB and homologs), in response to the nitrogen status of the cell that GlnD senses through the glutamine level. Under low glutamine levels, catalyzes the conversion of the PII proteins and UTP to PII-UMP and PPi, while under higher glutamine levels, GlnD hydrolyzes PII-UMP to PII and UMP (deuridylylation). Thus, controls uridylylation state and activity of the PII proteins, and plays an important role in the regulation of nitrogen assimilation and metabolism. The chain is Bifunctional uridylyltransferase/uridylyl-removing enzyme from Caulobacter vibrioides (strain ATCC 19089 / CIP 103742 / CB 15) (Caulobacter crescentus).